Reading from the N-terminus, the 44-residue chain is Photosystem I reaction center subunit IX (44 aa).

A helical membrane pass occupies residues 7 to 27 (YLSVAPVLATLWFGSLAGLLI).

This sequence belongs to the PsaJ family.

It localises to the plastid. It is found in the chloroplast thylakoid membrane. Its function is as follows. May help in the organization of the PsaE and PsaF subunits. This Illicium oligandrum (Star anise) protein is Photosystem I reaction center subunit IX.